Here is a 359-residue protein sequence, read N- to C-terminus: Pyruvate dehydrogenase E1 component subunit beta, mitochondrial (359 aa).

The N-terminal 30 residues, 1 to 30 (MAAVAGLVRGPLRQASGLLKRRFHRSAPAA), are a transit peptide targeting the mitochondrion. The residue at position 67 (Y67) is a Phosphotyrosine. E89 lines the thiamine diphosphate pocket. K(+)-binding residues include I142, A190, I191, D193, and N195. Position 354 is an N6-acetyllysine (K354).

As to quaternary structure, heterotetramer of two PDHA1 and two PDHB subunits. The heterotetramer interacts with DLAT, and is part of the multimeric pyruvate dehydrogenase complex that contains multiple copies of pyruvate dehydrogenase (E1), dihydrolipoamide acetyltransferase (DLAT, E2) and lipoamide dehydrogenase (DLD, E3). These subunits are bound to an inner core composed of about 48 DLAT and 12 PDHX molecules. Interacts with DLAT. It depends on thiamine diphosphate as a cofactor.

It is found in the mitochondrion matrix. The enzyme catalyses N(6)-[(R)-lipoyl]-L-lysyl-[protein] + pyruvate + H(+) = N(6)-[(R)-S(8)-acetyldihydrolipoyl]-L-lysyl-[protein] + CO2. Its function is as follows. The pyruvate dehydrogenase complex catalyzes the overall conversion of pyruvate to acetyl-CoA and CO(2), and thereby links the glycolytic pathway to the tricarboxylic cycle. This is Pyruvate dehydrogenase E1 component subunit beta, mitochondrial (Pdhb) from Rattus norvegicus (Rat).